Reading from the N-terminus, the 419-residue chain is Putative zinc metalloprotease SPy_1963/M5005_Spy1674 (419 aa).

Position 18 (H18) interacts with Zn(2+). The active site involves E19. H22 provides a ligand contact to Zn(2+). The next 4 helical transmembrane spans lie at 169 to 191 (LITN…ILLV), 301 to 323 (LAWS…FSLN), 343 to 365 (LESV…LIPI), and 392 to 411 (AYIT…AVTW). Residues 175–274 (GPMNNFILGI…LKTVAVKPQK (100 aa)) enclose the PDZ domain.

It belongs to the peptidase M50B family. Zn(2+) serves as cofactor.

The protein localises to the cell membrane. The chain is Putative zinc metalloprotease SPy_1963/M5005_Spy1674 from Streptococcus pyogenes serotype M1.